The primary structure comprises 121 residues: Large ribosomal subunit protein uL18 (121 aa).

The protein belongs to the universal ribosomal protein uL18 family. As to quaternary structure, part of the 50S ribosomal subunit; part of the 5S rRNA/L5/L18/L25 subcomplex. Contacts the 5S and 23S rRNAs.

This is one of the proteins that bind and probably mediate the attachment of the 5S RNA into the large ribosomal subunit, where it forms part of the central protuberance. This Ureaplasma urealyticum serovar 10 (strain ATCC 33699 / Western) protein is Large ribosomal subunit protein uL18.